The primary structure comprises 197 residues: Peptidyl-tRNA hydrolase (197 aa).

TRNA is bound at residue Y18. H23 functions as the Proton acceptor in the catalytic mechanism. TRNA contacts are provided by F69, N71, and N117.

It belongs to the PTH family. In terms of assembly, monomer.

Its subcellular location is the cytoplasm. The catalysed reaction is an N-acyl-L-alpha-aminoacyl-tRNA + H2O = an N-acyl-L-amino acid + a tRNA + H(+). In terms of biological role, hydrolyzes ribosome-free peptidyl-tRNAs (with 1 or more amino acids incorporated), which drop off the ribosome during protein synthesis, or as a result of ribosome stalling. Functionally, catalyzes the release of premature peptidyl moieties from peptidyl-tRNA molecules trapped in stalled 50S ribosomal subunits, and thus maintains levels of free tRNAs and 50S ribosomes. This Tolumonas auensis (strain DSM 9187 / NBRC 110442 / TA 4) protein is Peptidyl-tRNA hydrolase.